The chain runs to 481 residues: Protein nucleotidyltransferase YdiU (481 aa).

Residues glycine 85, glycine 87, arginine 88, lysine 108, aspartate 120, glycine 121, arginine 172, and arginine 179 each contribute to the ATP site. Aspartate 248 serves as the catalytic Proton acceptor. Residues asparagine 249 and aspartate 258 each contribute to the Mg(2+) site. Aspartate 258 is a binding site for ATP.

The protein belongs to the SELO family. The cofactor is Mg(2+). It depends on Mn(2+) as a cofactor.

It catalyses the reaction L-seryl-[protein] + ATP = 3-O-(5'-adenylyl)-L-seryl-[protein] + diphosphate. The enzyme catalyses L-threonyl-[protein] + ATP = 3-O-(5'-adenylyl)-L-threonyl-[protein] + diphosphate. The catalysed reaction is L-tyrosyl-[protein] + ATP = O-(5'-adenylyl)-L-tyrosyl-[protein] + diphosphate. It carries out the reaction L-histidyl-[protein] + UTP = N(tele)-(5'-uridylyl)-L-histidyl-[protein] + diphosphate. It catalyses the reaction L-seryl-[protein] + UTP = O-(5'-uridylyl)-L-seryl-[protein] + diphosphate. The enzyme catalyses L-tyrosyl-[protein] + UTP = O-(5'-uridylyl)-L-tyrosyl-[protein] + diphosphate. Nucleotidyltransferase involved in the post-translational modification of proteins. It can catalyze the addition of adenosine monophosphate (AMP) or uridine monophosphate (UMP) to a protein, resulting in modifications known as AMPylation and UMPylation. The sequence is that of Protein nucleotidyltransferase YdiU from Cereibacter sphaeroides (strain KD131 / KCTC 12085) (Rhodobacter sphaeroides).